The chain runs to 371 residues: Archaeal glycosylation protein Q (371 aa).

The segment at 19-39 (QRSDGSMPAGHNGPYHDPETP) is disordered.

The protein resides in the cytoplasm. Its pathway is cell surface structure biogenesis; S-layer biogenesis. In terms of biological role, putative isomerase involved in the N-glycosylation pathway. Required for the appearance of the methyl ester of hexuronic acid found at position four of the pentasaccharide N-linked to the S-layer glycoprotein. Either involved in preparing the third sugar for attachment of the fourth pentasaccharide subunit or processing the fourth sugar prior to its addition to the lipid-linked trisaccharide. This chain is Archaeal glycosylation protein Q (aglQ), found in Haloferax volcanii (strain ATCC 29605 / DSM 3757 / JCM 8879 / NBRC 14742 / NCIMB 2012 / VKM B-1768 / DS2) (Halobacterium volcanii).